The following is a 180-amino-acid chain: Bifunctional protein PyrR (180 aa).

Residues 101–113 (VILVDDVLYTGRT) carry the PRPP-binding motif.

Belongs to the purine/pyrimidine phosphoribosyltransferase family. PyrR subfamily. As to quaternary structure, homodimer and homohexamer; in equilibrium.

The catalysed reaction is UMP + diphosphate = 5-phospho-alpha-D-ribose 1-diphosphate + uracil. Its function is as follows. Regulates transcriptional attenuation of the pyrimidine nucleotide (pyr) operon by binding in a uridine-dependent manner to specific sites on pyr mRNA. This disrupts an antiterminator hairpin in the RNA and favors formation of a downstream transcription terminator, leading to a reduced expression of downstream genes. Functionally, also displays a weak uracil phosphoribosyltransferase activity which is not physiologically significant. The protein is Bifunctional protein PyrR of Bacillus cytotoxicus (strain DSM 22905 / CIP 110041 / 391-98 / NVH 391-98).